We begin with the raw amino-acid sequence, 207 residues long: 2,3-bisphosphoglycerate-dependent phosphoglycerate mutase (207 aa).

Residues 10–17, 23–24, arginine 62, 89–92, lysine 100, 116–117, and 160–161 contribute to the substrate site; these read RHGQSEWN, TG, ERDY, RR, and GN. Histidine 11 (tele-phosphohistidine intermediate) is an active-site residue. Glutamate 89 functions as the Proton donor/acceptor in the catalytic mechanism.

Belongs to the phosphoglycerate mutase family. BPG-dependent PGAM subfamily. As to quaternary structure, homodimer.

The catalysed reaction is (2R)-2-phosphoglycerate = (2R)-3-phosphoglycerate. The protein operates within carbohydrate degradation; glycolysis; pyruvate from D-glyceraldehyde 3-phosphate: step 3/5. Catalyzes the interconversion of 2-phosphoglycerate and 3-phosphoglycerate. This is 2,3-bisphosphoglycerate-dependent phosphoglycerate mutase from Nitrobacter winogradskyi (strain ATCC 25391 / DSM 10237 / CIP 104748 / NCIMB 11846 / Nb-255).